A 180-amino-acid polypeptide reads, in one-letter code: ATP-dependent protease subunit HslV (180 aa).

Thr-5 is a catalytic residue. The Na(+) site is built by Gly-161, Cys-164, and Thr-167.

Belongs to the peptidase T1B family. HslV subfamily. In terms of assembly, a double ring-shaped homohexamer of HslV is capped on each side by a ring-shaped HslU homohexamer. The assembly of the HslU/HslV complex is dependent on binding of ATP.

Its subcellular location is the cytoplasm. It catalyses the reaction ATP-dependent cleavage of peptide bonds with broad specificity.. Its activity is regulated as follows. Allosterically activated by HslU binding. Its function is as follows. Protease subunit of a proteasome-like degradation complex believed to be a general protein degrading machinery. The sequence is that of ATP-dependent protease subunit HslV from Campylobacter jejuni subsp. doylei (strain ATCC BAA-1458 / RM4099 / 269.97).